The sequence spans 262 residues: Pyridoxine 5'-phosphate synthase (262 aa).

Asn-6 is a 3-amino-2-oxopropyl phosphate binding site. Residue 8–9 (DH) coordinates 1-deoxy-D-xylulose 5-phosphate. Arg-17 contributes to the 3-amino-2-oxopropyl phosphate binding site. His-43 serves as the catalytic Proton acceptor. 1-deoxy-D-xylulose 5-phosphate is bound by residues Arg-45 and His-50. Glu-70 acts as the Proton acceptor in catalysis. Thr-102 provides a ligand contact to 1-deoxy-D-xylulose 5-phosphate. His-215 serves as the catalytic Proton donor. Residues Gly-216 and 237–238 (GH) each bind 3-amino-2-oxopropyl phosphate.

Belongs to the PNP synthase family. In terms of assembly, homooctamer; tetramer of dimers.

It localises to the cytoplasm. The enzyme catalyses 3-amino-2-oxopropyl phosphate + 1-deoxy-D-xylulose 5-phosphate = pyridoxine 5'-phosphate + phosphate + 2 H2O + H(+). It participates in cofactor biosynthesis; pyridoxine 5'-phosphate biosynthesis; pyridoxine 5'-phosphate from D-erythrose 4-phosphate: step 5/5. Its function is as follows. Catalyzes the complicated ring closure reaction between the two acyclic compounds 1-deoxy-D-xylulose-5-phosphate (DXP) and 3-amino-2-oxopropyl phosphate (1-amino-acetone-3-phosphate or AAP) to form pyridoxine 5'-phosphate (PNP) and inorganic phosphate. The polypeptide is Pyridoxine 5'-phosphate synthase (Helicobacter pylori (strain HPAG1)).